The following is a 460-amino-acid chain: 25S rRNA (cytosine-C(5))-methyltransferase rcm1 (460 aa).

S-adenosyl-L-methionine contacts are provided by residues 223-229, Glu246, Asp273, and Asp293; that span reads CAAPGNK. The active-site Nucleophile is Cys350. Positions 430–439 are enriched in basic and acidic residues; sequence KMYKNDDDTK. The tract at residues 430–460 is disordered; that stretch reads KMYKNDDDTKKRKRKKKKKEVKKKARIQGEE. Basic residues predominate over residues 440 to 460; that stretch reads KRKRKKKKKEVKKKARIQGEE.

It belongs to the class I-like SAM-binding methyltransferase superfamily. RsmB/NOP family. As to quaternary structure, interacts with trm112.

It localises to the nucleus. The protein resides in the nucleolus. The catalysed reaction is a cytidine in 25S rRNA + S-adenosyl-L-methionine = a 5-methylcytidine in 25S rRNA + S-adenosyl-L-homocysteine + H(+). Functionally, S-adenosyl-L-methionine-dependent methyltransferase that specifically methylates the C(5) position of a cytosine in 25S rRNA. The polypeptide is 25S rRNA (cytosine-C(5))-methyltransferase rcm1 (rcm1) (Schizosaccharomyces pombe (strain 972 / ATCC 24843) (Fission yeast)).